The chain runs to 357 residues: 3-dehydroquinate synthase (357 aa).

Residues 104–108 (GVVGD), 128–129 (TT), Lys-141, and 168–171 (FLET) contribute to the NAD(+) site. The Zn(2+) site is built by Glu-183, His-243, and His-260.

It belongs to the sugar phosphate cyclases superfamily. Dehydroquinate synthase family. It depends on NAD(+) as a cofactor. Co(2+) is required as a cofactor. Requires Zn(2+) as cofactor.

It is found in the cytoplasm. It carries out the reaction 7-phospho-2-dehydro-3-deoxy-D-arabino-heptonate = 3-dehydroquinate + phosphate. It functions in the pathway metabolic intermediate biosynthesis; chorismate biosynthesis; chorismate from D-erythrose 4-phosphate and phosphoenolpyruvate: step 2/7. Catalyzes the conversion of 3-deoxy-D-arabino-heptulosonate 7-phosphate (DAHP) to dehydroquinate (DHQ). In Streptococcus pyogenes serotype M6 (strain ATCC BAA-946 / MGAS10394), this protein is 3-dehydroquinate synthase.